A 386-amino-acid polypeptide reads, in one-letter code: uncharacterized protein (386 aa).

The residue at position 185 (lysine 185) is an N6-(pyridoxal phosphate)lysine.

Belongs to the DegT/DnrJ/EryC1 family. Requires pyridoxal 5'-phosphate as cofactor.

This is an uncharacterized protein from Methanocaldococcus jannaschii (strain ATCC 43067 / DSM 2661 / JAL-1 / JCM 10045 / NBRC 100440) (Methanococcus jannaschii).